Consider the following 257-residue polypeptide: ABC transporter ATP-binding protein YxdL (257 aa).

The region spanning 5–243 (LEVKHINKTY…FYEQILDVLS (239 aa)) is the ABC transporter domain. Residue 40 to 47 (GPSGSGKT) coordinates ATP.

The protein belongs to the ABC transporter superfamily. As to quaternary structure, the complex is composed of two ATP-binding proteins (YxdL) and two transmembrane proteins (YxdM).

In terms of biological role, part of the ABC transporter complex YxdLM which could be involved in peptide resistance. Responsible for energy coupling to the transport system. In Bacillus subtilis (strain 168), this protein is ABC transporter ATP-binding protein YxdL (yxdL).